The primary structure comprises 331 residues: ATPase GET3 (331 aa).

32–39 (KGGVGKTT) serves as a coordination point for ATP. Asp-61 is a catalytic residue. Glu-235 and Asn-262 together coordinate ATP. Zn(2+) contacts are provided by Cys-273 and Cys-276.

This sequence belongs to the arsA ATPase family. Homodimer.

Its subcellular location is the cytoplasm. The protein localises to the endoplasmic reticulum. In terms of biological role, ATPase required for the post-translational delivery of tail-anchored (TA) proteins to the endoplasmic reticulum. Recognizes and selectively binds the transmembrane domain of TA proteins in the cytosol. This complex then targets to the endoplasmic reticulum by membrane-bound receptors, where the tail-anchored protein is released for insertion. This process is regulated by ATP binding and hydrolysis. ATP binding drives the homodimer towards the closed dimer state, facilitating recognition of newly synthesized TA membrane proteins. ATP hydrolysis is required for insertion. Subsequently, the homodimer reverts towards the open dimer state, lowering its affinity for the membrane-bound receptor, and returning it to the cytosol to initiate a new round of targeting. This Malassezia globosa (strain ATCC MYA-4612 / CBS 7966) (Dandruff-associated fungus) protein is ATPase GET3.